Consider the following 391-residue polypeptide: DNA-directed RNA polymerase subunit Rpo1C (391 aa).

It belongs to the RNA polymerase beta' chain family. In terms of assembly, part of the RNA polymerase complex.

It is found in the cytoplasm. The enzyme catalyses RNA(n) + a ribonucleoside 5'-triphosphate = RNA(n+1) + diphosphate. In terms of biological role, DNA-dependent RNA polymerase (RNAP) catalyzes the transcription of DNA into RNA using the four ribonucleoside triphosphates as substrates. Forms part of the jaw domain. This is DNA-directed RNA polymerase subunit Rpo1C from Thermococcus gammatolerans (strain DSM 15229 / JCM 11827 / EJ3).